Here is a 421-residue protein sequence, read N- to C-terminus: D-amino acid dehydrogenase (421 aa).

Position 3–17 (3–17 (VLILGSGVIGVTSAY)) interacts with FAD.

Belongs to the DadA oxidoreductase family. The cofactor is FAD.

It carries out the reaction a D-alpha-amino acid + A + H2O = a 2-oxocarboxylate + AH2 + NH4(+). Its function is as follows. Oxidative deamination of D-amino acids. This chain is D-amino acid dehydrogenase, found in Bradyrhizobium diazoefficiens (strain JCM 10833 / BCRC 13528 / IAM 13628 / NBRC 14792 / USDA 110).